The following is a 452-amino-acid chain: Serine incorporator 2 (452 aa).

The next 11 helical transmembrane spans lie at 5–25, 41–61, 96–116, 131–151, 158–178, 205–225, 236–256, 266–286, 319–339, 387–407, and 426–446; these read LGAC…PCIL, FFTV…SPGV, AVYR…LLMV, GFWF…FYIP, IWFY…LLLL, LFFF…LLFV, GKVF…VAIL, SGLL…WLAL, WDAP…FISL, FFHL…TNWY, and ICAS…PLLL.

Belongs to the TDE1 family.

It is found in the cell membrane. The catalysed reaction is a 1,2-diacyl-sn-glycero-3-phospho-L-serine(in) = a 1,2-diacyl-sn-glycero-3-phospho-L-serine(out). It carries out the reaction a 1,2-diacyl-sn-glycero-3-phosphocholine(in) = a 1,2-diacyl-sn-glycero-3-phosphocholine(out). The enzyme catalyses a 1,2-diacyl-sn-glycero-3-phosphoethanolamine(in) = a 1,2-diacyl-sn-glycero-3-phosphoethanolamine(out). Functionally, non-ATP-dependent, non-specific lipid transporter for phosphatidylserine, phosphatidylcholine, and phosphatidylethanolamine. Functions as a scramblase that flips lipids in both directions across the membrane. In contrast to SERINC3 and SERINC5, has no effect on gammaretrovirus particles infectivity. The sequence is that of Serine incorporator 2 (SERINC2) from Bos taurus (Bovine).